The chain runs to 306 residues: MSSEKSGLPDSVPHTSPPPYNAPQPPAEPPAPPPQAAPSSHHHHHHHYHQSGTATLPRLGAGGLASSAATAQRGPSSSATLPRPPHHAPPGPAAGAPPPGCATLPRMPPDPYLQETRFEGPLPPPPPAAAAPPPPAPAQTAQAPGFVVPTHAGTVGTLPLGGYVAPGYPLQLQPCTAYVPVYPVGTPYAGGTPGGTGVTSTLPPPPQGPGLALLEPRRPPHDYMPIAVLTTICCFWPTGIIAIFKAVQVRTALARGDMVSAEIASREARNFSFISLAVGIAAMVLCTILTVVIIIAAQHHENYWDP.

Residues M1–Q142 form a disordered region. Residues M1 to Y223 lie on the Cytoplasmic side of the membrane. Residues T15 to A36 are compositionally biased toward pro residues. Residues S40–H49 are compositionally biased toward basic residues. 2 stretches are compositionally biased toward pro residues: residues H87–P111 and P121–P137. A helical membrane pass occupies residues M224–F244. Topologically, residues K245–S275 are extracellular. An intramembrane region (helical) is located at residues L276–A296. The Extracellular segment spans residues A297–P306.

The protein belongs to the CD225/Dispanin family. In terms of assembly, component of the outer core of AMPAR complex. AMPAR complex consists of an inner core made of 4 pore-forming GluA/GRIA proteins (GRIA1, GRIA2, GRIA3 and GRIA4) and 4 major auxiliary subunits arranged in a twofold symmetry. One of the two pairs of distinct binding sites is occupied either by CNIH2, CNIH3 or CACNG2, CACNG3. The other harbors CACNG2, CACNG3, CACNG4, CACNG8 or GSG1L. This inner core of AMPAR complex is complemented by outer core constituents binding directly to the GluA/GRIA proteins at sites distinct from the interaction sites of the inner core constituents. Outer core constituents include at least PRRT1, PRRT2, CKAMP44/SHISA9, FRRS1L and NRN1. The proteins of the inner and outer core serve as a platform for other, more peripherally associated AMPAR constituents. Alone or in combination, these auxiliary subunits control the gating and pharmacology of the AMPAR complex and profoundly impact their biogenesis and protein processing.

The protein localises to the cell membrane. It is found in the synapse. Required to maintain a pool of extrasynaptic AMPA-regulated glutamate receptors (AMPAR) which is necessary for synapse development and function. Regulates basal AMPAR function and synaptic transmission during development but is dispensable at mature hippocampal synapses. Plays a role in regulating basal phosphorylation levels of glutamate receptor GRIA1 and promotes GRIA1 and GRIA2 cell surface expression. This chain is Proline-rich transmembrane protein 1, found in Homo sapiens (Human).